The following is a 207-amino-acid chain: LexA repressor (207 aa).

The H-T-H motif DNA-binding region spans 28-48; that stretch reads VREIGEAVGLASSFTVHGHLS. Active-site for autocatalytic cleavage activity residues include Ser-130 and Lys-168.

The protein belongs to the peptidase S24 family. In terms of assembly, homodimer.

It catalyses the reaction Hydrolysis of Ala-|-Gly bond in repressor LexA.. Functionally, represses a number of genes involved in the response to DNA damage (SOS response), including recA and lexA. In the presence of single-stranded DNA, RecA interacts with LexA causing an autocatalytic cleavage which disrupts the DNA-binding part of LexA, leading to derepression of the SOS regulon and eventually DNA repair. This chain is LexA repressor, found in Staphylococcus aureus (strain Newman).